Reading from the N-terminus, the 623-residue chain is Kelch-like protein diablo (623 aa).

Positions 1–54 (MGDLPGSGSTAQPRDAAVTGTGGNSTAGGGSSVGSTAVDRPPSPARLSHTSEKH) are disordered. Thr19 bears the Phosphothreonine mark. A compositionally biased stretch (gly residues) spans 20-32 (GTGGNSTAGGGSS). One can recognise a BTB domain in the interval 72–139 (CDVVLNVGGR…CYTAHIIVEE (68 aa)). The BACK domain occupies 174-276 (CLGIRAFADT…SPKFLVGTVG (103 aa)). 6 Kelch repeats span residues 323–369 (VLFA…VLND), 371–417 (LYAV…VLDE), 418–464 (FLYA…VLGG), 466–511 (LYAI…VFNN), 513–558 (IYAV…VVNG), and 559–605 (QLYA…VMRA).

Its pathway is protein modification; protein ubiquitination. Its function is as follows. Probable substrate-specific adapter of an E3 ubiquitin-protein ligase complex which mediates the ubiquitination and subsequent proteasomal degradation of target proteins. May have a role in synapse differentiation and growth. This Drosophila simulans (Fruit fly) protein is Kelch-like protein diablo.